The primary structure comprises 630 residues: A-type voltage-gated potassium channel KCND2 (630 aa).

The Cytoplasmic portion of the chain corresponds to 1–184 (MAAGVAAWLP…FENPHTSTMA (184 aa)). The segment at 2 to 20 (AAGVAAWLPFARAAAIGWM) is interaction with KCNIP1, KCNIP2, and other family members. Thr-38 is modified (phosphothreonine). The segment at 71–90 (ERDFFYHPETQQYFFDRDPD) is interaction with KCNIP1. Residues His-105, Cys-111, Cys-132, and Cys-133 each coordinate Zn(2+). The helical transmembrane segment at 185 to 206 (LVFYYVTGFFIAVSVIANVVET) threads the bilayer. Residues 207–226 (VPCGSSPGHIKELPCGERYA) are Extracellular-facing. Residues 227–249 (VAFFCLDTACVMIFTVEYLLRLA) traverse the membrane as a helical segment. Over 250-256 (AAPSRYR) the chain is Cytoplasmic. A helical transmembrane segment spans residues 257–281 (FVRSVMSIIDVVAILPYYIGLVMTD). At 282 to 287 (NEDVSG) the chain is on the extracellular side. Residues 288-307 (AFVTLRVFRVFRIFKFSRHS) form a helical; Voltage-sensor membrane-spanning segment. Over 308 to 321 (QGLRILGYTLKSCA) the chain is Cytoplasmic. Residues 308 to 321 (QGLRILGYTLKSCA) are S4-S5 linker. A helical membrane pass occupies residues 322–345 (SELGFLLFSLTMAIIIFATVMFYA). Residues 346–357 (EKGSSASKFTSI) lie on the Extracellular side of the membrane. Positions 358–369 (PAAFWYTIVTMT) form an intramembrane region, helical. The K(+) site is built by Thr-370, Leu-371, Gly-372, and Tyr-373. Positions 370 to 375 (TLGYGD) match the Selectivity filter motif. Residues 370–377 (TLGYGDMV) lie within the membrane without spanning it. Over 378-380 (PKT) the chain is Extracellular. A helical transmembrane segment spans residues 381 to 403 (IAGKIFGSICSLSGVLVIALPVP). Topologically, residues 404–630 (VIVSNFSRIY…GGNIVRVSAL (227 aa)) are cytoplasmic. Residues 474–489 (FETQHHHLLHCLEKTT) are required for dendritic targeting. The tract at residues 474–630 (FETQHHHLLH…GGNIVRVSAL (157 aa)) is important for normal channel activation and inactivation, for interaction with KCNIP2, and probably other family members as well. Ser-548, Ser-552, Ser-572, and Ser-575 each carry phosphoserine. A disordered region spans residues 600-622 (IPTPPVTTPEGDDRPESPEYSGG). Residues Thr-602 and Thr-607 each carry the phosphothreonine modification. Ser-616 carries the post-translational modification Phosphoserine. The short motif at 627–630 (VSAL) is the PDZ-binding element.

This sequence belongs to the potassium channel family. D (Shal) (TC 1.A.1.2) subfamily. Kv4.2/KCND2 sub-subfamily. Homotetramer or heterotetramer with KCND1 or KCND3. Associates with the regulatory subunits KCNIP2, KCNIP3 and KCNIP4. Interacts with the regulatory subunit KCNIP1; this interaction mediates the capture of both the N- and C-terminus of KCND2, preventing N-type inactivation and stabilizing the S6 conformation, thereby accelerating closed state inactivation and recovery. In vivo, probably exists as heteromeric complex containing variable proportions of KCND1, KCND2, KCND3, KCNIP1, KCNIP2, KCNIP3, KCNIP4, DPP6 and DPP10. The tetrameric channel can associate with up to four regulatory subunits, such as KCNIP2 or KCNIP4. Interaction with four KCNIP4 chains does not reduce interaction with DPP10. Interacts with DLG4 and NCS1/FREQ. Interacts with DLG1. Probably part of a complex consisting of KCNIP1, KCNIP2 isoform 3 and KCND2. Interacts with FLNA, FLNC and DPP10. Identified in a complex with cAMP-dependent protein kinase (PKA), CAV3, AKAP6 and KCND3 in cardiac myocytes. Interacts (via S1 and S2 helices) with DPP6; this interaction stabilizes the conformation of the S1-S2 helices and facilitates S4 conformational change, including S4 sliding up and down, thereby accelerating activation, inactivation, and recovery. Phosphorylation in response to MAPK activation is increased in stimulated dendrites. Interaction with KCNIP2 and DPP6 propomtes phosphorylation by PKA at Ser-552. Phosphorylation at Ser-552 has no effect on interaction with KCNIP3, but is required for the regulation of channel activity by KCNIP3. Phosphorylation at Ser-552 leads to KCND2 internalization. Phosphorylated by MAPK in response to signaling via the metabotropic glutamate receptor GRM5. Phosphorylation at Ser-616 is required for the down-regulation of neuronal A-type currents in response to signaling via GRM5.

The protein resides in the cell membrane. The protein localises to the cell projection. It localises to the dendrite. Its subcellular location is the synapse. It is found in the perikaryon. The protein resides in the postsynaptic cell membrane. The protein localises to the dendritic spine. It localises to the sarcolemma. Its subcellular location is the cell junction. It is found in the membrane. The protein resides in the caveola. The enzyme catalyses K(+)(in) = K(+)(out). Voltage-gated potassium channel that mediates transmembrane potassium transport in excitable membranes, primarily in the brain, but also in rodent heart. Mediates the major part of the dendritic A-type current I(SA) in brain neurons. This current is activated at membrane potentials that are below the threshold for action potentials. It regulates neuronal excitability, prolongs the latency before the first spike in a series of action potentials, regulates the frequency of repetitive action potential firing, shortens the duration of action potentials and regulates the back-propagation of action potentials from the neuronal cell body to the dendrites. Contributes to the regulation of the circadian rhythm of action potential firing in suprachiasmatic nucleus neurons, which regulates the circadian rhythm of locomotor activity. Functions downstream of the metabotropic glutamate receptor GRM5 and plays a role in neuronal excitability and in nociception mediated by activation of GRM5. Mediates the transient outward current I(to) in rodent heart left ventricle apex cells, but not in human heart, where this current is mediated by another family member. Forms tetrameric potassium-selective channels through which potassium ions pass in accordance with their electrochemical gradient. The channel alternates between opened and closed conformations in response to the voltage difference across the membrane. Can form functional homotetrameric channels and heterotetrameric channels that contain variable proportions of KCND2 and KCND3; channel properties depend on the type of pore-forming alpha subunits that are part of the channel. In vivo, membranes probably contain a mixture of heteromeric potassium channel complexes. Interaction with specific isoforms of the regulatory subunits KCNIP1, KCNIP2, KCNIP3 or KCNIP4 strongly increases expression at the cell surface and thereby increases channel activity; it modulates the kinetics of channel activation and inactivation, shifts the threshold for channel activation to more negative voltage values, shifts the threshold for inactivation to less negative voltages and accelerates recovery after inactivation. Likewise, interaction with DPP6 or DPP10 promotes expression at the cell membrane and regulates both channel characteristics and activity. Upon depolarization, the channel goes from a resting closed state (C state) to an activated but non-conducting state (C* state), from there, the channel may either inactivate (I state) or open (O state). The sequence is that of A-type voltage-gated potassium channel KCND2 from Mustela putorius furo (European domestic ferret).